The sequence spans 103 residues: Protamine-2 (103 aa).

Residues 1–103 (MVRYRMRSLS…RTRRRRCRRY (103 aa)) form a disordered region. Ser-8 and Ser-10 each carry phosphoserine. Residues 8 to 17 (SLSERPHEVH) show a composition bias toward basic and acidic residues. The span at 23-35 (GQEQGHNGQEEQG) shows a compositional bias: low complexity. A Phosphoserine modification is found at Ser-37. The segment covering 39 to 48 (EHVEVYERTH) has biased composition (basic and acidic residues). The segment covering 51 to 103 (YSHHRRRRCSRRRLYRIHRRRHRSCRRRRRRSCRHRRRHRRGCRTRRRRCRRY) has biased composition (basic residues).

It belongs to the protamine P2 family. In terms of assembly, interacts with TDRP. In terms of processing, proteolytic processing into mature chains is required for histone eviction during spermatogenesis. Transition proteins (TNP1 and TNP2) are required for processing. As to expression, testis.

Its subcellular location is the nucleus. It is found in the chromosome. Functionally, protamines substitute for histones in the chromatin of sperm during the haploid phase of spermatogenesis. They compact sperm DNA into a highly condensed, stable and inactive complex. The polypeptide is Protamine-2 (PRM2) (Semnopithecus entellus (Northern plains gray langur)).